The primary structure comprises 510 residues: Cytochrome P450 4A6 (510 aa).

A propeptide spanning residues 1-4 is cleaved from the precursor; the sequence is MSVS. Heme is bound by residues E321 and C457.

This sequence belongs to the cytochrome P450 family. The cofactor is heme. As to expression, liver; kidney.

The protein resides in the endoplasmic reticulum membrane. The protein localises to the microsome membrane. It catalyses the reaction an omega-methyl-long-chain fatty acid + reduced [NADPH--hemoprotein reductase] + O2 = an omega-hydroxy-long-chain fatty acid + oxidized [NADPH--hemoprotein reductase] + H2O + H(+). Its function is as follows. Cytochromes P450 are a group of heme-thiolate monooxygenases. In liver microsomes, this enzyme is involved in an NADPH-dependent electron transport pathway. It oxidizes a variety of structurally unrelated compounds, including steroids, fatty acids, and xenobiotics. The kidney P-450 system is rather specialized for the omega-hydroxylation of fatty acids. Both P450-KA1 and P450-KA2 catalyze the omega- and (omega-1)-hydroxylation of various fatty acids with no drug-metabolizing activity, and hydroxylate prostaglandin A1 and A2 solely at the omega-position. This chain is Cytochrome P450 4A6 (CYP4A6), found in Oryctolagus cuniculus (Rabbit).